Reading from the N-terminus, the 1088-residue chain is RNA-directed RNA polymerase (1088 aa).

Residues 501-687 form the RdRp catalytic domain; that stretch reads LSYGDVTRFL…AKRYIAGGKI (187 aa).

Belongs to the reoviridae RNA-directed RNA polymerase family. Interacts with VP3 (Potential). Interacts with VP2; this interaction activates VP1. Interacts with NSP5; this interaction is probably necessary for the formation of functional virus factories. Interacts with NSP2; this interaction is weak. Mg(2+) serves as cofactor.

Its subcellular location is the virion. The enzyme catalyses RNA(n) + a ribonucleoside 5'-triphosphate = RNA(n+1) + diphosphate. In terms of biological role, RNA-directed RNA polymerase that is involved in both transcription and genome replication. Together with VP3 capping enzyme, forms an enzyme complex positioned near the channels situated at each of the five-fold vertices of the core. Following infection, the outermost layer of the virus is lost, leaving a double-layered particle (DLP) made up of the core and VP6 shell. VP1 then catalyzes the transcription of fully conservative plus-strand genomic RNAs that are extruded through the DLP's channels into the cytoplasm where they function as mRNAs for translation of viral proteins. One copy of each of the viral (+)RNAs is also recruited during core assembly, together with newly synthesized polymerase complexes and VP2. The polymerase of these novo-formed particles catalyzes the synthesis of complementary minus-strands leading to dsRNA formation. To do so, the polymerase specifically recognizes and binds 4 bases 5'-UGUG-3' in the conserved 3'-sequence of plus-strand RNA templates. VP2 presumably activates the autoinhibited VP1-RNA complex to coordinate packaging and genome replication. Once dsRNA synthesis is complete, the polymerase switches to the transcriptional mode, thus providing secondary transcription. The protein is RNA-directed RNA polymerase of Sus scrofa (Pig).